Reading from the N-terminus, the 153-residue chain is Ribosome maturation factor RimP (153 aa).

This sequence belongs to the RimP family.

It is found in the cytoplasm. In terms of biological role, required for maturation of 30S ribosomal subunits. The sequence is that of Ribosome maturation factor RimP from Nostoc punctiforme (strain ATCC 29133 / PCC 73102).